Consider the following 405-residue polypeptide: Phosphopentomutase (405 aa).

Residues Asp10, Asp305, His310, Asp346, His347, and His358 each contribute to the Mn(2+) site.

It belongs to the phosphopentomutase family. It depends on Mn(2+) as a cofactor.

The protein localises to the cytoplasm. It carries out the reaction 2-deoxy-alpha-D-ribose 1-phosphate = 2-deoxy-D-ribose 5-phosphate. The enzyme catalyses alpha-D-ribose 1-phosphate = D-ribose 5-phosphate. It functions in the pathway carbohydrate degradation; 2-deoxy-D-ribose 1-phosphate degradation; D-glyceraldehyde 3-phosphate and acetaldehyde from 2-deoxy-alpha-D-ribose 1-phosphate: step 1/2. Isomerase that catalyzes the conversion of deoxy-ribose 1-phosphate (dRib-1-P) and ribose 1-phosphate (Rib-1-P) to deoxy-ribose 5-phosphate (dRib-5-P) and ribose 5-phosphate (Rib-5-P), respectively. This Methylobacterium sp. (strain 4-46) protein is Phosphopentomutase.